A 160-amino-acid polypeptide reads, in one-letter code: CXXC motif containing zinc binding protein (160 aa).

4 residues coordinate Zn(2+): C33, C36, C67, and C70.

The protein belongs to the UPF0587 family.

The protein is CXXC motif containing zinc binding protein (czib) of Xenopus laevis (African clawed frog).